The following is a 491-amino-acid chain: Glutamate--tRNA ligase (491 aa).

The 'HIGH' region motif lies at 9-19 (PSPTGTPHVGM). A 'KMSKS' region motif is present at residues 253-257 (KLSKR). Residue Lys256 coordinates ATP.

It belongs to the class-I aminoacyl-tRNA synthetase family. Glutamate--tRNA ligase type 1 subfamily. As to quaternary structure, monomer.

Its subcellular location is the cytoplasm. It carries out the reaction tRNA(Glu) + L-glutamate + ATP = L-glutamyl-tRNA(Glu) + AMP + diphosphate. Catalyzes the attachment of glutamate to tRNA(Glu) in a two-step reaction: glutamate is first activated by ATP to form Glu-AMP and then transferred to the acceptor end of tRNA(Glu). The sequence is that of Glutamate--tRNA ligase from Leifsonia xyli subsp. xyli (strain CTCB07).